The sequence spans 417 residues: Phosphoglycerate kinase (417 aa).

(2R)-3-phosphoglycerate contacts are provided by valine 23, aspartate 24, phenylalanine 25, asparagine 26, glutamine 39, arginine 40, serine 63, histidine 64, glycine 66, arginine 67, leucine 122, arginine 123, histidine 170, and arginine 171. Position 214 (glycine 214) interacts with ADP. A CDP-binding site is contributed by glycine 214. AMP-binding residues include alanine 215 and lysine 216. Alanine 215 contributes to the ATP binding site. Position 215 (alanine 215) interacts with Mg(2+). Aspartate 219 provides a ligand contact to CDP. Aspartate 219 lines the Mg(2+) pocket. Lysine 220 is an AMP binding site. Lysine 220 serves as a coordination point for ATP. Glycine 238 is a binding site for ADP. Glycine 238 provides a ligand contact to CDP. Glycine 239 and glycine 313 together coordinate AMP. ATP-binding residues include glycine 239 and glycine 313. Positions 338, 340, and 343 each coordinate CDP. Phenylalanine 343 contributes to the ADP binding site. AMP is bound at residue glutamate 344. Residues glutamate 344, aspartate 375, and threonine 376 each contribute to the ATP site. Aspartate 375 contacts Mg(2+).

The protein belongs to the phosphoglycerate kinase family. As to quaternary structure, monomer. Mg(2+) is required as a cofactor.

The protein resides in the cytoplasm. Its subcellular location is the mitochondrion. The catalysed reaction is (2R)-3-phosphoglycerate + ATP = (2R)-3-phospho-glyceroyl phosphate + ADP. The protein operates within carbohydrate degradation; glycolysis; pyruvate from D-glyceraldehyde 3-phosphate: step 2/5. Functionally, catalyzes one of the two ATP producing reactions in the glycolytic pathway via the reversible conversion of 1,3-diphosphoglycerate to 3-phosphoglycerate. Both L- and D- forms of purine and pyrimidine nucleotides can be used as substrates, but the activity is much lower on pyrimidines. Negatively regulates the biosynthesis of acetyl-CoA from pyruvate in the mitochondrion. The protein is Phosphoglycerate kinase (pgk1) of Hypocrea rufa (Trichoderma viride).